The chain runs to 574 residues: Secreted lipase 1 (574 aa).

Residues 1-17 (MKLSLVPIFALLSTAFA) form the signal peptide. Cys95 and Cys132 are oxidised to a cystine. Catalysis depends on Ser244, which acts as the Acyl-ester intermediate. Cys303 and Cys312 are joined by a disulfide. Residue Asn323 is glycosylated (N-linked (GlcNAc...) asparagine). The active-site Charge relay system is Glu376. A glycan (N-linked (GlcNAc...) asparagine) is linked at Asn386. The Charge relay system role is filled by His489. Asn524 carries an N-linked (GlcNAc...) asparagine glycan.

The protein belongs to the type-B carboxylesterase/lipase family.

It localises to the secreted. It catalyses the reaction a carboxylic ester + H2O = an alcohol + a carboxylate + H(+). Its function is as follows. Secreted lipase that allows the use of hydrolyzed lipids as carbon sources. Has highest activity with methyl umbelliferyl oleate (C18:1), whereas much lower activities are obtained with the respective esters of palmitate (C16:0) and stearate (C18:0) (24% and 12% of the activity obtained with umbelliferyl oleate, respectively). Hydrolyzes 1- and 3-positioned ester bonds in preference to 2-positioned ester bonds. The production rate of monoglycerides is lower than that of diacylglycerides. Seems not required for the penetration of intact host tissue. The chain is Secreted lipase 1 from Botryotinia fuckeliana (strain B05.10) (Noble rot fungus).